The chain runs to 203 residues: Proteasome subunit beta 2 (203 aa).

A propeptide spans 1-9 (MGEEFQVGA) (removed in mature form; by autocatalysis). The active-site Nucleophile is the Thr10.

The protein belongs to the peptidase T1B family. In terms of assembly, the 20S proteasome core is composed of 14 alpha and 14 beta subunits that assemble into four stacked heptameric rings, resulting in a barrel-shaped structure. The two inner rings, each composed of seven catalytic beta subunits, are sandwiched by two outer rings, each composed of seven alpha subunits. The catalytic chamber with the active sites is on the inside of the barrel. Has a gated structure, the ends of the cylinder being occluded by the N-termini of the alpha-subunits. Is capped at one or both ends by the proteasome regulatory ATPase, PAN.

Its subcellular location is the cytoplasm. The catalysed reaction is Cleavage of peptide bonds with very broad specificity.. With respect to regulation, the formation of the proteasomal ATPase PAN-20S proteasome complex, via the docking of the C-termini of PAN into the intersubunit pockets in the alpha-rings, triggers opening of the gate for substrate entry. Interconversion between the open-gate and close-gate conformations leads to a dynamic regulation of the 20S proteasome proteolysis activity. Functionally, component of the proteasome core, a large protease complex with broad specificity involved in protein degradation. In Pyrobaculum neutrophilum (strain DSM 2338 / JCM 9278 / NBRC 100436 / V24Sta) (Thermoproteus neutrophilus), this protein is Proteasome subunit beta 2.